A 356-amino-acid polypeptide reads, in one-letter code: Heat-inducible transcription repressor HrcA (356 aa).

It belongs to the HrcA family.

In terms of biological role, negative regulator of class I heat shock genes (grpE-dnaK-dnaJ and groELS operons). Prevents heat-shock induction of these operons. The sequence is that of Heat-inducible transcription repressor HrcA from Bartonella quintana (strain Toulouse) (Rochalimaea quintana).